We begin with the raw amino-acid sequence, 119 residues long: Ribonuclease P protein component (119 aa).

The protein belongs to the RnpA family. Consists of a catalytic RNA component (M1 or rnpB) and a protein subunit.

The catalysed reaction is Endonucleolytic cleavage of RNA, removing 5'-extranucleotides from tRNA precursor.. RNaseP catalyzes the removal of the 5'-leader sequence from pre-tRNA to produce the mature 5'-terminus. It can also cleave other RNA substrates such as 4.5S RNA. The protein component plays an auxiliary but essential role in vivo by binding to the 5'-leader sequence and broadening the substrate specificity of the ribozyme. This Pectobacterium atrosepticum (strain SCRI 1043 / ATCC BAA-672) (Erwinia carotovora subsp. atroseptica) protein is Ribonuclease P protein component.